A 507-amino-acid chain; its full sequence is Chromosomal replication initiator protein DnaA (507 aa).

Residues 1-87 are domain I, interacts with DnaA modulators; it reads MSVELWQQCV…IGSKRSSAPR (87 aa). The span at 85 to 110 shows a compositional bias: low complexity; sequence APRAAPNAPLAAAQVSQAQANAAPAS. The interval 85–158 is disordered; it reads APRAAPNAPL…QQAPVRAEQR (74 aa). Residues 87–170 are domain II; that stretch reads RAAPNAPLAA…QVEGALKHTS (84 aa). Residues 126–140 show a composition bias toward basic and acidic residues; that stretch reads QKTEEISEEPSRDSF. Residues 171 to 387 are domain III, AAA+ region; it reads YLNRTFTFEN…GALKRVIAHS (217 aa). 4 residues coordinate ATP: Gly215, Gly217, Lys218, and Thr219. The tract at residues 388-507 is domain IV, binds dsDNA; the sequence is HFMGRDITIE…YKNLLRTLTT (120 aa).

This sequence belongs to the DnaA family. Oligomerizes as a right-handed, spiral filament on DNA at oriC.

It localises to the cytoplasm. In terms of biological role, plays an essential role in the initiation and regulation of chromosomal replication. ATP-DnaA binds to the origin of replication (oriC) to initiate formation of the DNA replication initiation complex once per cell cycle. Binds the DnaA box (a 9 base pair repeat at the origin) and separates the double-stranded (ds)DNA. Forms a right-handed helical filament on oriC DNA; dsDNA binds to the exterior of the filament while single-stranded (ss)DNA is stabiized in the filament's interior. The ATP-DnaA-oriC complex binds and stabilizes one strand of the AT-rich DNA unwinding element (DUE), permitting loading of DNA polymerase. After initiation quickly degrades to an ADP-DnaA complex that is not apt for DNA replication. Binds acidic phospholipids. This Pseudomonas fluorescens (strain Pf0-1) protein is Chromosomal replication initiator protein DnaA.